Here is a 233-residue protein sequence, read N- to C-terminus: Leucyl/phenylalanyl-tRNA--protein transferase (233 aa).

It belongs to the L/F-transferase family.

The protein resides in the cytoplasm. It carries out the reaction N-terminal L-lysyl-[protein] + L-leucyl-tRNA(Leu) = N-terminal L-leucyl-L-lysyl-[protein] + tRNA(Leu) + H(+). It catalyses the reaction N-terminal L-arginyl-[protein] + L-leucyl-tRNA(Leu) = N-terminal L-leucyl-L-arginyl-[protein] + tRNA(Leu) + H(+). The enzyme catalyses L-phenylalanyl-tRNA(Phe) + an N-terminal L-alpha-aminoacyl-[protein] = an N-terminal L-phenylalanyl-L-alpha-aminoacyl-[protein] + tRNA(Phe). Functionally, functions in the N-end rule pathway of protein degradation where it conjugates Leu, Phe and, less efficiently, Met from aminoacyl-tRNAs to the N-termini of proteins containing an N-terminal arginine or lysine. In Shewanella denitrificans (strain OS217 / ATCC BAA-1090 / DSM 15013), this protein is Leucyl/phenylalanyl-tRNA--protein transferase.